Here is a 134-residue protein sequence, read N- to C-terminus: Interleukin-4 (134 aa).

An N-terminal signal peptide occupies residues 1–23 (MGLTYQLLPALVCLLACTSFIQG). Cystine bridges form between Cys-24-Cys-133 and Cys-48-Cys-88. Residue Asn-38 is glycosylated (N-linked (GlcNAc...) asparagine). Asn-101 carries N-linked (GlcNAc...) asparagine glycosylation.

Belongs to the IL-4/IL-13 family.

It is found in the secreted. Its function is as follows. Participates in at least several B-cell activation processes as well as of other cell types. It is a costimulator of DNA-synthesis. It induces the expression of class II MHC molecules on resting B-cells. It enhances both secretion and cell surface expression of IgE and IgG1. It also regulates the expression of the low affinity Fc receptor for IgE (CD23) on both lymphocytes and monocytes. Positively regulates IL31RA expression in macrophages. Stimulates autophagy in dendritic cells by interfering with mTORC1 signaling and through the induction of RUFY4. The chain is Interleukin-4 (IL4) from Equus caballus (Horse).